A 259-amino-acid polypeptide reads, in one-letter code: Small ribosomal subunit protein eS1 (259 aa).

It belongs to the eukaryotic ribosomal protein eS1 family. Component of the small ribosomal subunit. Mature ribosomes consist of a small (40S) and a large (60S) subunit. The 40S subunit contains about 33 different proteins and 1 molecule of RNA (18S). The 60S subunit contains about 49 different proteins and 3 molecules of RNA (25S, 5.8S and 5S).

The protein localises to the cytoplasm. In Monosiga brevicollis (Choanoflagellate), this protein is Small ribosomal subunit protein eS1.